The sequence spans 179 residues: Acireductone dioxygenase (179 aa).

The interval 7 to 26 is disordered; it reads MDDAPGDPRQPHRPDPGRPV. 4 residues coordinate Fe(2+): His-88, His-90, Glu-94, and His-133. Positions 88, 90, 94, and 133 each coordinate Ni(2+).

It belongs to the acireductone dioxygenase (ARD) family. Monomer. Interacts with MMP14. Requires Fe(2+) as cofactor. Ni(2+) is required as a cofactor. In terms of tissue distribution, detected in heart, colon, lung, stomach, brain, spleen, liver, skeletal muscle and kidney.

Its subcellular location is the cytoplasm. The protein localises to the nucleus. The protein resides in the cell membrane. It catalyses the reaction 1,2-dihydroxy-5-(methylsulfanyl)pent-1-en-3-one + O2 = 4-methylsulfanyl-2-oxobutanoate + formate + 2 H(+). The catalysed reaction is 1,2-dihydroxy-5-(methylsulfanyl)pent-1-en-3-one + O2 = 3-(methylsulfanyl)propanoate + CO + formate + 2 H(+). It participates in amino-acid biosynthesis; L-methionine biosynthesis via salvage pathway; L-methionine from S-methyl-5-thio-alpha-D-ribose 1-phosphate: step 5/6. Its function is as follows. Catalyzes 2 different reactions between oxygen and the acireductone 1,2-dihydroxy-3-keto-5-methylthiopentene (DHK-MTPene) depending upon the metal bound in the active site. Fe-containing acireductone dioxygenase (Fe-ARD) produces formate and 2-keto-4-methylthiobutyrate (KMTB), the alpha-ketoacid precursor of methionine in the methionine recycle pathway. Ni-containing acireductone dioxygenase (Ni-ARD) produces methylthiopropionate, carbon monoxide and formate, and does not lie on the methionine recycle pathway. Also down-regulates cell migration mediated by MMP14. Necessary for hepatitis C virus replication in an otherwise non-permissive cell line. This Homo sapiens (Human) protein is Acireductone dioxygenase.